We begin with the raw amino-acid sequence, 727 residues long: 1,4-alpha-glucan branching enzyme GlgB (727 aa).

Asp-405 acts as the Nucleophile in catalysis. The active-site Proton donor is the Glu-458.

This sequence belongs to the glycosyl hydrolase 13 family. GlgB subfamily. Monomer.

It carries out the reaction Transfers a segment of a (1-&gt;4)-alpha-D-glucan chain to a primary hydroxy group in a similar glucan chain.. Its pathway is glycan biosynthesis; glycogen biosynthesis. Its function is as follows. Catalyzes the formation of the alpha-1,6-glucosidic linkages in glycogen by scission of a 1,4-alpha-linked oligosaccharide from growing alpha-1,4-glucan chains and the subsequent attachment of the oligosaccharide to the alpha-1,6 position. This is 1,4-alpha-glucan branching enzyme GlgB from Yersinia enterocolitica serotype O:8 / biotype 1B (strain NCTC 13174 / 8081).